The primary structure comprises 469 residues: MWKEKVLEYENQMIEDLKGLLSIESIRDDSKATADAPVGPGPREALDYMYNLGKRDGFSTHDVDHIAGRIEAGKGEDVLGILCHVDVVPAGDGWDSNPFQPVVTDNAIIARGTLDDKGPTIAAYYAVKILNEMKVDWKKRIHIIIGTDEESDWKCTDRYFKTEEMPALGFAPDAEFPAIHGEKGITTFDLVQNEVTEDTDEPDYELLKFESGQRYNMVPDYAKAEVLVKENMTDVIQNFENFLQQNQLQGESTVDSGILILTIEGKAVHGMDPSLGVNAGLFLLKFLASLNLNKSAKDFVEFNERYLFESHFGEKMGMKFHTDIMGDVTTNIGVISYDKEKAGRYGINLRYPEGFKFEDAIDRFRSEINELGFNLELGKVQKPHYVDKNDPFVKTLVNAYRNQTGDMTEPYTIGGGTYARNLDKGVAFGAMFADSEDLMHQKNEYITKKQLINATSIYLEAIYALCVED.

A Zn(2+)-binding site is contributed by histidine 84. Aspartate 86 is a catalytic residue. A Zn(2+)-binding site is contributed by aspartate 115. Catalysis depends on glutamate 149, which acts as the Proton acceptor. 3 residues coordinate Zn(2+): glutamate 150, aspartate 173, and histidine 440.

This sequence belongs to the peptidase M20A family. Zn(2+) serves as cofactor.

The polypeptide is Putative dipeptidase SE_1424 (Staphylococcus epidermidis (strain ATCC 12228 / FDA PCI 1200)).